Consider the following 289-residue polypeptide: Kinetochore-associated protein MTW1 (289 aa).

Residues Arg105–Arg147 are a coiled coil.

Belongs to the mis12 family. In terms of assembly, component of the MIND kinetochore complex, which is composed of at least MTW1, NNF1, NSL1 and DSN1.

It localises to the chromosome. Its subcellular location is the centromere. The protein localises to the kinetochore. It is found in the cytoplasm. The protein resides in the cytoskeleton. It localises to the spindle pole. In terms of biological role, acts as an essential component of the kinetochore MIND complex, which is required for the spindle checkpoint and kinetochore integrity. MIND plays a role in establishing a bipolar spindle-kinetochore interaction by joining kinetochore subunits contacting DNA to those contacting microtubules. This chain is Kinetochore-associated protein MTW1 (MTW1), found in Saccharomyces cerevisiae (strain ATCC 204508 / S288c) (Baker's yeast).